The following is a 325-amino-acid chain: Ferrochelatase (325 aa).

Histidine 195 and glutamate 276 together coordinate Fe cation.

It belongs to the ferrochelatase family.

The protein resides in the cytoplasm. It catalyses the reaction heme b + 2 H(+) = protoporphyrin IX + Fe(2+). It participates in porphyrin-containing compound metabolism; protoheme biosynthesis; protoheme from protoporphyrin-IX: step 1/1. In terms of biological role, catalyzes the ferrous insertion into protoporphyrin IX. The protein is Ferrochelatase of Methylococcus capsulatus (strain ATCC 33009 / NCIMB 11132 / Bath).